The primary structure comprises 104 residues: Nucleoid-associated protein LSL_1227 (104 aa).

Residues 1–19 (MMMRGMNMQSMMKQMQKLQ) show a composition bias toward low complexity. The interval 1–24 (MMMRGMNMQSMMKQMQKLQKNMKK) is disordered.

The protein belongs to the YbaB/EbfC family. In terms of assembly, homodimer.

The protein localises to the cytoplasm. The protein resides in the nucleoid. In terms of biological role, binds to DNA and alters its conformation. May be involved in regulation of gene expression, nucleoid organization and DNA protection. This chain is Nucleoid-associated protein LSL_1227, found in Ligilactobacillus salivarius (strain UCC118) (Lactobacillus salivarius).